Here is a 218-residue protein sequence, read N- to C-terminus: MEHDYLISLLVIVGIDLILGGDNAVVIAMASRHLPDKQRQQAIILGTFIAVAMRIGLTSAAVYLLNIPFLQCAGGIFLLYLGYQLLIEKKDTKHIKSSTSLWRAIRTIVLADLFMSLDNVIAVAGASHGEFSLVVIGLCVSVPVIIWGSKLIHIALEKIPLLIYAGSGLLAYTGGEMIVRDKKLSLFMAQHGTVETLLPILTVAFVILASIYYQQVEK.

The next 7 helical transmembrane spans lie at 9–29 (LLVI…VIAM), 42–62 (AIIL…SAAV), 67–87 (IPFL…QLLI), 107–127 (TIVL…AGAS), 134–154 (VVIG…LIHI), 159–179 (IPLL…EMIV), and 192–212 (GTVE…ASIY).

The protein belongs to the TerC family.

Its subcellular location is the cell membrane. This is an uncharacterized protein from Bacillus subtilis (strain 168).